Here is a 150-residue protein sequence, read N- to C-terminus: Ribonuclease H (150 aa).

The 141-residue stretch at Met-1–Ile-141 folds into the RNase H type-1 domain. Asp-9, Glu-47, Asp-69, and Asp-133 together coordinate Mg(2+).

This sequence belongs to the RNase H family. Monomer. Mg(2+) serves as cofactor.

The protein resides in the cytoplasm. It carries out the reaction Endonucleolytic cleavage to 5'-phosphomonoester.. Its function is as follows. Endonuclease that specifically degrades the RNA of RNA-DNA hybrids. The protein is Ribonuclease H of Xanthomonas axonopodis pv. citri (strain 306).